The sequence spans 335 residues: MAAPSGVHLLVRRGSHRIFSSPLNHIYLHKQSSSQQRRNFFFRRQRDISHSIVLPAAVSSAHPVPKHIKKPDYVTTGIVPDWGDSIEVKNEDQIQGLHQACQLARHVLLLAGKSLKVDMTTEEIDALVHREIISHNAYPSPLGYGGFPKSVCTSVNNVLCHGIPDSRPLQDGDIINIDVTVYYNGYHGDTSETFLVGNVDECGKKLVEVARRCRDEAIAACRAGAPFSVIGNTISHITHQNGFQVCPHFVGHGIGSYFHGHPEIWHHANDSDLPMEEGMAFTIEPIITEGSPEFKVLEDAWTVVSLDNQRSAQFEHTVLITSRGAQILTKLPHEA.

The transit peptide at 1–19 (MAAPSGVHLLVRRGSHRIF) directs the protein to the mitochondrion. A substrate-binding site is contributed by histidine 161. A divalent metal cation-binding residues include aspartate 178, aspartate 189, and histidine 252. Histidine 259 lines the substrate pocket. Residues glutamate 284 and glutamate 315 each coordinate a divalent metal cation.

The protein belongs to the peptidase M24A family. Methionine aminopeptidase type 1 subfamily. The cofactor is Co(2+). Requires Zn(2+) as cofactor. It depends on Mn(2+) as a cofactor. Fe(2+) is required as a cofactor. Overexpressed in colon cancer cell lines and colon tumors as compared to normal tissues (at protein level).

The protein resides in the mitochondrion. It catalyses the reaction Release of N-terminal amino acids, preferentially methionine, from peptides and arylamides.. In terms of biological role, removes the N-terminal methionine from nascent proteins. The N-terminal methionine is often cleaved when the second residue in the primary sequence is small and uncharged (Met-Ala-, Cys, Gly, Pro, Ser, Thr, or Val). Requires deformylation of the N(alpha)-formylated initiator methionine before it can be hydrolyzed. May play a role in colon tumorigenesis. This Homo sapiens (Human) protein is Methionine aminopeptidase 1D, mitochondrial (METAP1D).